The chain runs to 634 residues: Ankyrin repeat protein OPG025 (634 aa).

ANK repeat units follow at residues 36–69, 70–100, 103–134, 175–211, 307–337, and 412–441; these read DGETPLKAYVTKKNNNIKNDVVILLLSSVDYKNI, NDFDIFEYLCSDNIDIDLLKLLISKGIEINS, NGINIVEKYATTSNPNVDVFKLLLDKGIPTCS, MGKTVLYYYIITRSQDGYATSLDVINYLISHKKEMRY, IQDLLLEYVSYHTVYINVIKCMIDEGATLYR, and HGCSILYHCIKSHSVSLVEWLIDNGADINI.

It belongs to the orthopoxvirus OPG025 family. In terms of assembly, interacts with components of host SCF complex CUL1 and SKP1 and components of the cullin deneddylation/COP9 signalosome complex subunits COPS7A and COPS7B.

In terms of biological role, plays a role in the inhibition of host immune repsonse by counteracting the action of interferons on early events in the viral replication cycle. This Vaccinia virus (strain Western Reserve) (VACV) protein is Ankyrin repeat protein OPG025 (OPG035).